A 622-amino-acid polypeptide reads, in one-letter code: DNA mismatch repair protein MutL (622 aa).

This sequence belongs to the DNA mismatch repair MutL/HexB family.

This protein is involved in the repair of mismatches in DNA. It is required for dam-dependent methyl-directed DNA mismatch repair. May act as a 'molecular matchmaker', a protein that promotes the formation of a stable complex between two or more DNA-binding proteins in an ATP-dependent manner without itself being part of a final effector complex. This Prosthecochloris aestuarii (strain DSM 271 / SK 413) protein is DNA mismatch repair protein MutL.